The following is a 693-amino-acid chain: Polyribonucleotide nucleotidyltransferase (693 aa).

Residues aspartate 486 and aspartate 492 each coordinate Mg(2+). One can recognise a KH domain in the interval 553–612; it reads PRFTTLKIHPDKIRDVIGKGGATIRALTEETGTSIDISDDGTVKIASVDKAAGDEARRRI. Positions 622 to 690 constitute an S1 motif domain; the sequence is GRIYEGRVVK…KQGRIRLSMK (69 aa).

It belongs to the polyribonucleotide nucleotidyltransferase family. In terms of assembly, component of the RNA degradosome, which is a multiprotein complex involved in RNA processing and mRNA degradation. Requires Mg(2+) as cofactor.

It localises to the cytoplasm. It carries out the reaction RNA(n+1) + phosphate = RNA(n) + a ribonucleoside 5'-diphosphate. In terms of biological role, involved in mRNA degradation. Catalyzes the phosphorolysis of single-stranded polyribonucleotides processively in the 3'- to 5'-direction. This chain is Polyribonucleotide nucleotidyltransferase, found in Thioalkalivibrio sulfidiphilus (strain HL-EbGR7).